Consider the following 500-residue polypeptide: NAD(P)H-quinone oxidoreductase chain 4, chloroplastic (500 aa).

15 consecutive transmembrane segments (helical) span residues 4–24 (LPWL…IPLF), 31–51 (IIRW…TYTF), 87–107 (IGPI…AWPV), 111–131 (PRLF…LFAS), 134–154 (ILLF…LISM), 167–187 (FILY…SMGL), 207–227 (VVLE…KLPI), 242–262 (HYST…YGLI), 274–294 (SLFS…AALT), 305–325 (IAYS…SMAD), 330–350 (GAIL…FLAG), 358–378 (TLFL…STMF), 386–406 (LALP…GIIT), 416–436 (IVIA…LLSM), and 462–482 (IFIS…PDLV).

Belongs to the complex I subunit 4 family.

It localises to the plastid. The protein localises to the chloroplast thylakoid membrane. The catalysed reaction is a plastoquinone + NADH + (n+1) H(+)(in) = a plastoquinol + NAD(+) + n H(+)(out). The enzyme catalyses a plastoquinone + NADPH + (n+1) H(+)(in) = a plastoquinol + NADP(+) + n H(+)(out). This Cycas taitungensis (Prince sago) protein is NAD(P)H-quinone oxidoreductase chain 4, chloroplastic.